The sequence spans 412 residues: cAMP-dependent protein kinase regulatory subunit (412 aa).

The dimerization and phosphorylation stretch occupies residues 1-142; that stretch reads MSFEEVYEEL…RLKRSVAGNF (142 aa). The short motif at 101–105 is the Pseudophosphorylation motif element; sequence RRQSV. A Phosphoserine modification is found at Ser104. Residues 143 to 277, Glu224, Arg233, 278 to 412, Glu344, and Arg353 contribute to the 3',5'-cyclic AMP site; these read LFKN…EEVP and ILSS…STKA. The interval 392-412 is disordered; the sequence is MGMDNEYGDQSLHRSPPSTKA.

It belongs to the cAMP-dependent kinase regulatory chain family. As to quaternary structure, tetramer, composed of 2 regulatory (R) and 2 catalytic (C) subunits. In the presence of cAMP it dissociates into 2 active monomeric C subunits and an R dimer.

In Schizosaccharomyces pombe (strain 972 / ATCC 24843) (Fission yeast), this protein is cAMP-dependent protein kinase regulatory subunit (cgs1).